A 710-amino-acid polypeptide reads, in one-letter code: Polyribonucleotide nucleotidyltransferase (710 aa).

Residues Asp501 and Asp507 each coordinate Mg(2+). Positions 568 to 628 (PKVQMFQIKP…ETVKQAILFI (61 aa)) constitute a KH domain. Positions 638–710 (NSIYHAHISR…RIDFVLISKK (73 aa)) constitute an S1 motif domain.

This sequence belongs to the polyribonucleotide nucleotidyltransferase family. Mg(2+) is required as a cofactor.

It localises to the cytoplasm. The catalysed reaction is RNA(n+1) + phosphate = RNA(n) + a ribonucleoside 5'-diphosphate. Functionally, involved in mRNA degradation. Catalyzes the phosphorolysis of single-stranded polyribonucleotides processively in the 3'- to 5'-direction. This is Polyribonucleotide nucleotidyltransferase from Phytoplasma australiense.